A 63-amino-acid chain; its full sequence is MGIKPSYIKNFGLELIGRYGDRFTPDFDENKHQVSELTVIDSKRVRNRIAGFITRKVNTKKHL.

The protein belongs to the eukaryotic ribosomal protein eS17 family.

The protein is Small ribosomal subunit protein eS17 of Methanosphaerula palustris (strain ATCC BAA-1556 / DSM 19958 / E1-9c).